We begin with the raw amino-acid sequence, 181 residues long: MKQLLDFLPLVIFFAVYKFFDIYIASGALIAATALQLIVTYALYKKLEKMHLITFAMVTVFGTLTLVFHDDAFIKWKVTIIYALFALALGISQLLNKSILKSMLGKEMQVADKIWAHITWYWVIFFATCGLVNIYVAFSLPLETWVNFKVFGLTALTLVNTVITVFYLYKHLPEDQRKELK.

Helical transmembrane passes span 10–30, 50–70, 72–92, 118–138, and 148–168; these read LVIF…GALI, MHLI…VFHD, AFIK…LGIS, ITWY…YVAF, and FKVF…VFYL.

It belongs to the YciB family.

The protein localises to the cell inner membrane. Plays a role in cell envelope biogenesis, maintenance of cell envelope integrity and membrane homeostasis. This chain is Inner membrane-spanning protein YciB, found in Shewanella putrefaciens (strain CN-32 / ATCC BAA-453).